We begin with the raw amino-acid sequence, 122 residues long: MIQQQTLLKVADNSGAKEIMCIRVLGGSKRKWGNIGDIIVASVKSATPGGVVKKGEVVKAVIVRSARGLRRTDGSYIKFDENAAVIIKEDKQPRGTRIFGPVARELRDKDFTKILSLAPEVL.

It belongs to the universal ribosomal protein uL14 family. In terms of assembly, part of the 50S ribosomal subunit. Forms a cluster with proteins L3 and L19. In the 70S ribosome, L14 and L19 interact and together make contacts with the 16S rRNA in bridges B5 and B8.

Binds to 23S rRNA. Forms part of two intersubunit bridges in the 70S ribosome. This Clostridium kluyveri (strain ATCC 8527 / DSM 555 / NBRC 12016 / NCIMB 10680 / K1) protein is Large ribosomal subunit protein uL14.